A 247-amino-acid chain; its full sequence is PF03932 family protein CutC (247 aa).

This sequence belongs to the CutC family.

It localises to the cytoplasm. This chain is PF03932 family protein CutC, found in Vibrio parahaemolyticus serotype O3:K6 (strain RIMD 2210633).